We begin with the raw amino-acid sequence, 299 residues long: Tetrahydromethanopterin S-methyltransferase subunit E (299 aa).

6 helical membrane passes run 57–79 (AISG…AWAL), 95–115 (GVAA…RTVG), 133–153 (IGPI…AAYL), 158–178 (LGNP…VGAI), 237–257 (GLCF…GNII), and 262–282 (VTKT…AAGI).

Belongs to the MtrE family. As to quaternary structure, the complex is composed of 8 subunits; MtrA, MtrB, MtrC, MtrD, MtrE, MtrF, MtrG and MtrH.

Its subcellular location is the cell membrane. The enzyme catalyses 5-methyl-5,6,7,8-tetrahydromethanopterin + coenzyme M + 2 Na(+)(in) = 5,6,7,8-tetrahydromethanopterin + methyl-coenzyme M + 2 Na(+)(out). Its pathway is one-carbon metabolism; methanogenesis from CO(2); methyl-coenzyme M from 5,10-methylene-5,6,7,8-tetrahydromethanopterin: step 2/2. Functionally, part of a complex that catalyzes the formation of methyl-coenzyme M and tetrahydromethanopterin from coenzyme M and methyl-tetrahydromethanopterin. This is an energy-conserving, sodium-ion translocating step. In Methanococcus maripaludis (strain C5 / ATCC BAA-1333), this protein is Tetrahydromethanopterin S-methyltransferase subunit E.